Reading from the N-terminus, the 849-residue chain is MSAQSLPAATPPTLKPPRIIRPRPPSRHRAPHSPGPLHNGSSPKALPQISNDASASVCTSIFWEPPTASLKPPALLPPSVSRTSLDSQTSPDSPSSTPSPSPVSRRSISPEPAPCSPVPPPKPSGSSRTPLPSGPTPLQDGSASAPGTVRRLAGKFEWGAEGKAQSSDSLERCSQGSTEVNGEKETPEAALSGNGSQENGTPDAALACPPCCPCVCHVAKPGLELRWVPVGSSEDILRIPCRASPLRASRSRINPPVISHPPVVLTSYRSTAERKLLPPLKPPKPTKVRQDISTSEELPQPDLKLPSEDGIQTATKAWEGDRPEGAPLNAPPVALEGREEEGLDGLKGLQWELPLQDEPLYQTYRAAVLSEELWGVGEDGGPSPANPGEAPTFSRLPGPRNTLWQELPAVRGSGLLESLSPQERRMQESLFEVVTSEASYLRSLRLLTDTFVLSQALRDTLTPRDHHTLFSNVQRVQSVSERFLGTLLSRVRSSPHITDLCDVVHAHAVGPFFVYVDYVRNQQYQEETYSRLMDTNVRFSAELRRLQSLPKCERLPLPSFLLLPFQRITRLRMLLQNILSQTEEGSSRQENAQKALGAVSKIIERCSAEVGRMKQTEELIRLTQRLRFHKVKALPLVSWSRRLELQGELTELGCRRGGVLFTSRPRFTPLCLLLFSDLLLITQPKSGQRLQVLDYAHRSLVQAQQVPDPSGPPTFRLSLLSNHQGRPTHRLLQAASLSDMQRWLGAFPTPGPLPCSPDTIYEDCECSQELCSEPSTPSKTEGQSLESKAPRKHLHKNPEGWLKGLPGAFPAQLVCEVTGEHERRKHLRQHQKLLEAVGPSSGTPDTPQP.

Disordered regions lie at residues 1-146 (MSAQ…ASAP), 159-202 (GAEG…NGTP), and 277-308 (LPPLKPPKPTKVRQDISTSEELPQPDLKLPSE). The span at 18-31 (RIIRPRPPSRHRAP) shows a compositional bias: basic residues. The span at 48 to 59 (QISNDASASVCT) shows a compositional bias: polar residues. Residues 65-110 (PPTASLKPPALLPPSVSRTSLDSQTSPDSPSSTPSPSPVSRRSISP) show a composition bias toward low complexity. Ser107 and Ser109 each carry phosphoserine. Pro residues predominate over residues 111-123 (EPAPCSPVPPPKP). Positions 164 to 180 (AQSSDSLERCSQGSTEV) are enriched in polar residues. Tyr361 is subject to Phosphotyrosine; by EPHB2. One can recognise a DH domain in the interval 425 to 609 (RMQESLFEVV…SKIIERCSAE (185 aa)). 2 stretches are compositionally biased toward polar residues: residues 771–786 (CSEPSTPSKTEGQSLE) and 840–849 (SSGTPDTPQP). 2 disordered regions span residues 771-803 (CSEPSTPSKTEGQSLESKAPRKHLHKNPEGWLK) and 819-849 (GEHERRKHLRQHQKLLEAVGPSSGTPDTPQP).

Interacts with EPHA4. Interacts with EPHB2. Post-translationally, phosphorylated on tyrosine residues upon EFNA1 stimulation. EPHB2-dependent phosphorylation at Tyr-361 triggers UBE3A-mediated ubiquitination. In terms of processing, ubiquitinated; UBE3A-mediated ubiquitination and degradation by the proteasome promotes EFNB1-dependent synapse formation. In terms of tissue distribution, at P12, expressed is detected in the CA1 region and the dentate gyrus of the hippocampus.

The protein localises to the cell projection. The protein resides in the dendrite. In terms of biological role, specific GEF for RhoA activation. Does not activate RAC1 or CDC42. Regulates vascular smooth muscle contractility. Negatively regulates excitatory synapse development by suppressing the synapse-promoting activity of EPHB2. This chain is Rho guanine nucleotide exchange factor 15 (Arhgef15), found in Mus musculus (Mouse).